A 67-amino-acid polypeptide reads, in one-letter code: Alpha-toxin Tf3 (67 aa).

Positions 2-63 (KDGYPVEGDN…EPTKTNGRCK (62 aa)) constitute an LCN-type CS-alpha/beta domain. Disulfide bonds link cysteine 12/cysteine 62, cysteine 16/cysteine 38, cysteine 24/cysteine 45, and cysteine 28/cysteine 47. At proline 64 the chain carries Proline amide.

It belongs to the long (4 C-C) scorpion toxin superfamily. Sodium channel inhibitor family. Alpha subfamily. As to expression, expressed by the venom gland.

It localises to the secreted. In terms of biological role, alpha toxins bind voltage-independently at site-3 of sodium channels (Nav) and inhibit the inactivation of the activated channels, thereby blocking neuronal transmission. The chain is Alpha-toxin Tf3 from Tityus fasciolatus (Central Brazilian scorpion).